The sequence spans 237 residues: CDP-diacylglycerol--inositol 3-phosphatidyltransferase (237 aa).

Residues 1–12 are Cytoplasmic-facing; sequence MGKNEQKDPNVY. Residues 13 to 33 traverse the membrane as a helical segment; the sequence is FFVPNLIGFTRVFLVLISLYF. Residues 34–41 lie on the Lumenal side of the membrane; sequence MSWHPNYC. Residues 42–62 traverse the membrane as a helical segment; the sequence is TIVYLYSSLLDAFDGWAARKL. Mg(2+) contacts are provided by aspartate 52 and aspartate 55. Residues glycine 56, arginine 60, and threonine 66 each coordinate a CDP-1,2-diacyl-sn-glycerol. Topologically, residues 63–71 are cytoplasmic; it reads HQATNFGAI. The helical transmembrane segment at 72-92 threads the bilayer; it reads LDMVTDRCATSCLLCFLCAAY. Mg(2+)-binding residues include aspartate 73 and aspartate 77. The active-site Proton acceptor is aspartate 77. Over 93-94 the chain is Lumenal; it reads PK. A helical membrane pass occupies residues 95 to 115; sequence YAIIFQLLVSLDLASHYMHMY. Residues 116–144 are Cytoplasmic-facing; that stretch reads STLHQGASSHKTVTKKHNWMLRLYYGNNK. The helical transmembrane segment at 145-165 threads the bilayer; sequence VLFIFCAANEMFFVALYLLSF. Residues 166-185 lie on the Lumenal side of the membrane; it reads TPRTPPKLGYLPVPSFIYST. Residues 186 to 206 traverse the membrane as a helical segment; sequence GELPLSYPTLLAVLCGPICLA. The Cytoplasmic segment spans residues 207 to 237; it reads KQIINVVQLVNAANALVKMDVEQRRAAKKLQ.

Belongs to the CDP-alcohol phosphatidyltransferase class-I family. Requires Mn(2+) as cofactor. Mg(2+) serves as cofactor.

It localises to the microsome membrane. It is found in the endoplasmic reticulum membrane. The protein localises to the golgi apparatus membrane. The protein resides in the mitochondrion outer membrane. The enzyme catalyses a CDP-1,2-diacyl-sn-glycerol + myo-inositol = a 1,2-diacyl-sn-glycero-3-phospho-(1D-myo-inositol) + CMP + H(+). Its function is as follows. Catalyzes the synthesis of phosphatidylinositol (PtdIns). The chain is CDP-diacylglycerol--inositol 3-phosphatidyltransferase (pis1) from Schizosaccharomyces pombe (strain 972 / ATCC 24843) (Fission yeast).